The chain runs to 130 residues: uncharacterized protein (130 aa).

Residues 1 to 19 (MLAPLFLCCLRNLFRKLIS) form the signal peptide.

The protein localises to the secreted. This is an uncharacterized protein from Homo sapiens (Human).